The sequence spans 47 residues: AVEKTNSSSSLGEVVDRILDKGVVVDLWVRVSLVGIELLALEARVVI.

Belongs to the gas vesicle GvpA family. In terms of assembly, the gas vesicle shell is 2 nm thick and consists of a single layer of this protein. It forms helical ribs nearly perpendicular to the long axis of the vesicle.

The protein localises to the gas vesicle shell. Functionally, gas vesicles are hollow, gas filled proteinaceous nanostructures found in some microorganisms. During planktonic growth they allow positioning of the organism at a favorable depth for light or nutrient acquisition. GvpA forms the protein shell. This chain is Gas vesicle protein A, found in Dactylococcopsis salina (Myxobaktron salinum).